Here is a 401-residue protein sequence, read N- to C-terminus: MALRVTRNRLASTRAEQGGKTCSVSGPTLKPRAALGEIGNVAANKDVTKKNVKMEAAKKTRITAKAEKIEQPKATVVPVKPEPKVQVPAQPEPASPTPMETSGCEPADLCQAFSDVILNTAIRDVDADDYDNPMLCSEYVKDIYKYLRQLEVEQSVKPNYLQGQEVTGNMRAILIDWLVQVNLKFRLLQETMYMTVGIIDRFLQDHPVPKKQLQLVGVTAMFLASKYEEMYPPEISDFAYVTDRAYTTAQIRDMEMTILRVLKFQLGRPLPLQFLRRASKIYEVTAEQHTLAKYLLELSIVDYDMAHFPPSTVASAALGLTLKVLDAGEWDVTLQHYMDYTAHTLTPVMAHIAKNVVKVNDGLTKHMAIKGKYSTSKQMRVATIAQLKSSLVKDLAKQLSQ.

2 disordered regions span residues 1–30 (MALRVTRNRLASTRAEQGGKTCSVSGPTLK) and 84–103 (KVQVPAQPEPASPTPMETSG). A compositionally biased stretch (polar residues) spans 9–26 (RLASTRAEQGGKTCSVSG).

It belongs to the cyclin family. Cyclin AB subfamily. In terms of assembly, interacts with the CDK1 protein kinase to form a serine/threonine kinase holoenzyme complex also known as maturation promoting factor (MPF). The cyclin subunit imparts substrate specificity to the complex.

Its function is as follows. Essential for the control of the cell cycle at the G2/M (mitosis) transition. This Oryzias javanicus (Javanese ricefish) protein is G2/mitotic-specific cyclin-B1 (ccnb1).